Here is a 184-residue protein sequence, read N- to C-terminus: MESFSSKSLALQAEKKLLSKMAGRSVAHLFIDETSSEVLDELYRVSKEYTHSRPQAQRVIKDLIKVAIKVAVLHRNGSFGPSELALATRFRQKLRQGAMTALSFGEVDFTFEAAVLAGLLTECRDVLLELVEHHLTPKSHGRIRHVFDHFSDPGLLTALYGPDFTQHLGKICDGLRKLLDEGKL.

Serine 3 carries the phosphoserine; by MAP3K7 modification.

The protein belongs to the TNFAIP8 family. TNFAIP8L2 subfamily. In terms of assembly, may interact with CASP8; however, such result is unclear since PubMed:19079267 could not reproduce the interaction with CASP8. Interacts with RAC1. Phosphorylated by TAK1/MAP3K7; this phosphorylation triggers association with BTRC and subsequent ubiquitination and degradation. Post-translationally, ubiquitinated in a BTRC-depdent manner; leading to degradation mediated through the proteasome pathway. As to expression, expressed in T-cells, B-cells, macrophages, neurons in the brain and brainstem, and stratified squamous epithelia of the esophagus, cervix and skin.

Its subcellular location is the cytoplasm. The protein resides in the nucleus. The protein localises to the lysosome. Acts as a negative regulator of innate and adaptive immunity by maintaining immune homeostasis. Plays a regulatory role in the Toll-like signaling pathway by determining the strength of LPS-induced signaling and gene expression. Inhibits TCR-mediated T-cell activation and negatively regulate T-cell function to prevent hyperresponsiveness. Also inhibits autolysosome formation via negatively modulating MTOR activation by interacting with RAC1 and promoting the disassociation of the RAC1-MTOR complex. Plays an essential role in NK-cell biology by acting as a checkpoint and displaying an expression pattern correlating with NK-cell maturation process and by negatively regulating NK-cell maturation and antitumor immunity. Mechanistically, suppresses IL-15-triggered mTOR activity in NK-cells. This Homo sapiens (Human) protein is Tumor necrosis factor alpha-induced protein 8-like protein 2 (TNFAIP8L2).